Here is a 90-residue protein sequence, read N- to C-terminus: Small ribosomal subunit protein uS15c (90 aa).

It belongs to the universal ribosomal protein uS15 family. In terms of assembly, part of the 30S ribosomal subunit.

It is found in the plastid. The protein localises to the chloroplast. The protein is Small ribosomal subunit protein uS15c (rps15) of Secale cereale (Rye).